Reading from the N-terminus, the 349-residue chain is tRNA pseudouridine synthase D (349 aa).

Position 27 (phenylalanine 27) interacts with substrate. The active-site Nucleophile is aspartate 80. Residue asparagine 129 participates in substrate binding. One can recognise a TRUD domain in the interval 155–303; the sequence is GVPNYFGAQR…VEASRRAMLL (149 aa). Phenylalanine 329 is a substrate binding site.

It belongs to the pseudouridine synthase TruD family.

The enzyme catalyses uridine(13) in tRNA = pseudouridine(13) in tRNA. Its function is as follows. Responsible for synthesis of pseudouridine from uracil-13 in transfer RNAs. This is tRNA pseudouridine synthase D from Salmonella dublin (strain CT_02021853).